A 598-amino-acid polypeptide reads, in one-letter code: (+)-bornyl diphosphate synthase, chloroplastic (598 aa).

Residues 1–54 constitute a chloroplast transit peptide; it reads MSIISMNVSILSKPLNCLHNLERRPSKALLVPCTAPTARLRASCSSKLQEAHQI. Arg-314 is a substrate binding site. Mg(2+)-binding residues include Asp-351 and Asp-355. Positions 351 to 355 match the DDXXD motif motif; it reads DDIYD. Arg-493 serves as a coordination point for substrate. Residues Asp-496, Thr-500, and Glu-504 each coordinate Mg(2+). Thr-500 lines the substrate pocket. Lys-512 provides a ligand contact to substrate.

It belongs to the terpene synthase family. In terms of assembly, homodimer. Mg(2+) serves as cofactor.

It localises to the plastid. The protein localises to the chloroplast. It catalyses the reaction (2E)-geranyl diphosphate = (2S,4R)-bornyl diphosphate. The enzyme catalyses (2E)-geranyl diphosphate = (1R,4S)-camphene + diphosphate. The catalysed reaction is (2E)-geranyl diphosphate = (1R,5R)-alpha-pinene + diphosphate. It functions in the pathway terpene metabolism; (R)-camphor biosynthesis. Its function is as follows. Catalyzes the formation of the (+)-camphor precursor (+)-bornyl diphosphate from geranyl diphosphate. The enzyme also produces significant amounts of (+)-alpha-pinene, (+)-camphene, and (+-)-limonene. This chain is (+)-bornyl diphosphate synthase, chloroplastic, found in Salvia officinalis (Sage).